The chain runs to 239 residues: Ribonuclease PH (239 aa).

Phosphate-binding positions include Arg86 and Gly124–Arg126.

This sequence belongs to the RNase PH family. As to quaternary structure, homohexameric ring arranged as a trimer of dimers.

The catalysed reaction is tRNA(n+1) + phosphate = tRNA(n) + a ribonucleoside 5'-diphosphate. Its function is as follows. Phosphorolytic 3'-5' exoribonuclease that plays an important role in tRNA 3'-end maturation. Removes nucleotide residues following the 3'-CCA terminus of tRNAs; can also add nucleotides to the ends of RNA molecules by using nucleoside diphosphates as substrates, but this may not be physiologically important. Probably plays a role in initiation of 16S rRNA degradation (leading to ribosome degradation) during starvation. The chain is Ribonuclease PH from Marinomonas sp. (strain MWYL1).